A 475-amino-acid polypeptide reads, in one-letter code: Dihydrolipoyl dehydrogenase (475 aa).

Residues 37 to 46, Lys55, and Ala118 each bind FAD; that span reads EQYYSLGGVC. The cysteines at positions 46 and 51 are disulfide-linked. NAD(+) contacts are provided by residues 183 to 187, Asp206, Val239, and 272 to 275; these read GGGII and AIGR. Residues Asp315 and Ala323 each coordinate FAD. Residue His447 is the Proton acceptor of the active site.

The protein belongs to the class-I pyridine nucleotide-disulfide oxidoreductase family. In terms of assembly, homodimer. The cofactor is FAD.

Its subcellular location is the cytoplasm. The catalysed reaction is N(6)-[(R)-dihydrolipoyl]-L-lysyl-[protein] + NAD(+) = N(6)-[(R)-lipoyl]-L-lysyl-[protein] + NADH + H(+). Its function is as follows. Lipoamide dehydrogenase is a component of the alpha-ketoacid dehydrogenase complexes. This is Dihydrolipoyl dehydrogenase (lpdA) from Buchnera aphidicola subsp. Baizongia pistaciae (strain Bp).